The chain runs to 478 residues: PTS system mannitol-specific EIICB component (478 aa).

The Cytoplasmic portion of the chain corresponds to 1–29 (MQQQEQQQGGMKVKVQRFGSYLSGMIMPN). One can recognise a PTS EIIC type-2 domain in the interval 18 to 347 (FGSYLSGMIM…VILKSSKASE (330 aa)). The helical transmembrane segment at 30–51 (IGAFIAWGIITALFIPAGWFPN) threads the bilayer. At 52–55 (EQLN) the chain is on the extracellular side. Residues 56-76 (TLVSPMITYLLPLLIAYTGGK) form a helical membrane-spanning segment. The Cytoplasmic portion of the chain corresponds to 77–139 (MIYDHRGGVV…QGFEMLINNF (63 aa)). The chain crosses the membrane as a helical span at residues 140–161 (TAGIVGAALTILAFYAIGPVVL). Residues 162–170 (TLNKLLAAG) lie on the Extracellular side of the membrane. Residues 171–191 (VEVIVHANLLPVASVFVEPAK) form a helical membrane-spanning segment. The Cytoplasmic segment spans residues 192–278 (VLFLNNAINH…ILMKPALILA (87 aa)). The chain crosses the membrane as a helical span at residues 279-298 (AIAGGASGLLTFTIFNAGLV). Over 299–318 (AAASPGSIIALMAMTPRGGY) the chain is Extracellular. The chain crosses the membrane as a helical span at residues 319–340 (FGVLAGVLVAAAVSFIVSAVIL). The Cytoplasmic segment spans residues 341-478 (KSSKASEEDL…YDELIEKLKK (138 aa)). The region spanning 390-478 (NKIIFACDAG…YDELIEKLKK (89 aa)) is the PTS EIIB type-2 domain. Residue Cys-396 is the Phosphocysteine intermediate; for EIIB activity of the active site. Cys-396 carries the phosphocysteine; by EIIA modification.

In terms of assembly, homodimer.

It is found in the cell membrane. The enzyme catalyses D-mannitol(out) + N(pros)-phospho-L-histidyl-[protein] = D-mannitol 1-phosphate(in) + L-histidyl-[protein]. In terms of biological role, the phosphoenolpyruvate-dependent sugar phosphotransferase system (sugar PTS), a major carbohydrate active transport system, catalyzes the phosphorylation of incoming sugar substrates concomitantly with their translocation across the cell membrane. The enzyme II CmtAB PTS system is involved in D-mannitol transport. The chain is PTS system mannitol-specific EIICB component from Bacillus subtilis (strain 168).